Consider the following 473-residue polypeptide: Phosphatidylserine synthase 2 (473 aa).

The tract at residues 1-25 (MRRGERRVAGGSGSESPLLKGRRST) is disordered. Over 1–40 (MRRGERRVAGGSGSESPLLKGRRSTESEVYDDGTNTFFWR) the chain is Cytoplasmic. 3 positions are modified to phosphoserine: serine 12, serine 14, and serine 16. Residues 41–61 (AHTLTVLFILTCALGYVTLLE) form a helical membrane-spanning segment. At 62–74 (ETPQDTAYNTKRG) the chain is on the lumenal side. The helical transmembrane segment at 75–95 (IVASILVFLCFGVTQAKDGPF) threads the bilayer. Residues 96–104 (SRPHPAYWR) are Cytoplasmic-facing. A helical membrane pass occupies residues 105 to 125 (FWLCVSVVYELFLIFILFQTV). Residues 126 to 291 (QDGRQFLKYV…EWKPASSLHR (166 aa)) are Lumenal-facing. A glycan (N-linked (GlcNAc...) asparagine) is linked at asparagine 159. A helical membrane pass occupies residues 292 to 312 (WLAVCGIILVFLLAELNTFYL). Residue lysine 313 is a topological domain, cytoplasmic. Residues 314-334 (FVLWMPPEHYLVLLRLVFFVN) form a helical membrane-spanning segment. The Lumenal segment spans residues 335–354 (VGGVAMREIYDFMDELKPHR). The chain crosses the membrane as a helical span at residues 355 to 375 (KLGQQAWLVAAITVTELLIVV). Residues 376 to 381 (KYDPHT) are Cytoplasmic-facing. Residues 382-402 (LTLSLPFYISQCWTLGSILVL) form a helical membrane-spanning segment. Topologically, residues 403–473 (TWTVWRFFLR…TAEEGTSAAS (71 aa)) are lumenal. Residues 422–473 (RRQKQQSHQARAVNNRDGHPGPDDDLLGTGTAEEEGTTNDGVTAEEGTSAAS) are disordered.

Belongs to the phosphatidyl serine synthase family. As to expression, highly expressed in testis. Detected at lower levels in kidney and heart.

The protein localises to the endoplasmic reticulum membrane. It is found in the membrane. The catalysed reaction is a 1,2-diacyl-sn-glycero-3-phosphoethanolamine + L-serine = a 1,2-diacyl-sn-glycero-3-phospho-L-serine + ethanolamine. The enzyme catalyses 1-hexadecanoyl-2-(9Z-octadecenoyl)-sn-glycero-3-phosphoethanolamine + L-serine = 1-hexadecanoyl-2-(9Z-octadecenoyl)-sn-glycero-3-phospho-L-serine + ethanolamine. It catalyses the reaction 1-hexadecanoyl-2-(4Z,7Z,10Z,13Z,16Z,19Z-docosahexaenoyl)-sn-glycero-3-phosphoethanolamine + L-serine = 1-hexadecanoyl-2-(4Z,7Z,10Z,13Z,16Z,19Z-docosahexaenoyl)-sn-glycero-3-phosphoserine + ethanolamine. It carries out the reaction 1-octadecanoyl-2-(5Z,8Z,11Z,14Z)-eicosatetraenoyl-sn-glycero-3-phosphoethanolamine + L-serine = 1-octadecanoyl-2-(5Z,8Z,11Z,14Z)-eicosatetraenoyl-sn-glycero-3-phosphoserine + ethanolamine. The catalysed reaction is 1-octadecanoyl-2-(4Z,7Z,10Z,13Z,16Z,19Z-docosahexaenoyl)-sn-glycero-3-phosphoethanolamine + L-serine = 1-octadecanoyl-2-(4Z,7Z,10Z,13Z,16Z,19Z-docosahexaenoyl)-sn-glycero-3-phosphoserine + ethanolamine. The enzyme catalyses 1-(1Z-octadecenyl)-2-(4Z,7Z,10Z,13Z,16Z,19Z-docosahexaenoyl)-sn-glycero-3-phosphoethanolamine + L-serine = 1-(1Z-octadecenyl)-2-(4Z,7Z,10Z,13Z,16Z,19Z-docosahexaenoyl)-sn-glycero-3-phospho-L-serine + ethanolamine. It catalyses the reaction 1-octadecanoyl-2-(9Z-octadecenoyl)-sn-glycero-3-phosphoethanolamine + L-serine = 1-octadecanoyl-2-(9Z-octadecenoyl)-sn-glycero-3-phospho-L-serine + ethanolamine. It carries out the reaction 1-(1Z-octadecenyl)-2-(9Z-octadecenoyl)-sn-glycero-3-phosphoethanolamine + L-serine = 1-(1Z-octadecenyl)-2-(9Z-octadecenoyl)-sn-glycero-3-phospho-L-serine + ethanolamine. The catalysed reaction is 1-(1Z-octadecenyl)-2-(5Z,8Z,11Z,14Z- eicosatetraenoyl)-sn-glycero-3-phosphoethanolamine + L-serine = 1-(1Z-octadecenyl)-2-(5Z,8Z,11Z,14Z-eicosatetraenoyl)-sn-glycero-3-phospho-L-serine + ethanolamine. The protein operates within phospholipid metabolism; phosphatidylserine biosynthesis. With respect to regulation, almost complete inhibition by ethanolamine in both the mitochondria-associated membrane (MAM) and endoplasmic reticulum (ER) per se. In terms of biological role, catalyzes a base-exchange reaction in which the polar head group of phosphatidylethanolamine (PE) or phosphatidylcholine (PC) is replaced by L-serine. Catalyzes the conversion of phosphatatidylethanolamine and does not act on phosphatidylcholine. Can utilize both phosphatidylethanolamine (PE) plasmalogen and diacyl PE as substrate and the latter is six times better utilized, indicating the importance of an ester linkage at the sn-1 position. Although it shows no sn-1 fatty acyl preference, exhibits significant preference towards docosahexaenoic acid (22:6n-3) compared with 18:1 or 20:4 at the sn-2 position. The sequence is that of Phosphatidylserine synthase 2 (Ptdss2) from Mus musculus (Mouse).